The sequence spans 362 residues: Dual-specificity RNA methyltransferase RlmN (362 aa).

The Proton acceptor role is filled by Glu-100. Residues 106 to 345 (EPDRNTLCIS…VFIRNSRGED (240 aa)) enclose the Radical SAM core domain. Cys-113 and Cys-350 are oxidised to a cystine. [4Fe-4S] cluster-binding residues include Cys-120, Cys-124, and Cys-127. Residues 177 to 178 (GE), Ser-209, 231 to 233 (SLH), and Asn-307 contribute to the S-adenosyl-L-methionine site. The active-site S-methylcysteine intermediate is the Cys-350.

This sequence belongs to the radical SAM superfamily. RlmN family. [4Fe-4S] cluster is required as a cofactor.

It is found in the cytoplasm. The catalysed reaction is adenosine(2503) in 23S rRNA + 2 reduced [2Fe-2S]-[ferredoxin] + 2 S-adenosyl-L-methionine = 2-methyladenosine(2503) in 23S rRNA + 5'-deoxyadenosine + L-methionine + 2 oxidized [2Fe-2S]-[ferredoxin] + S-adenosyl-L-homocysteine. The enzyme catalyses adenosine(37) in tRNA + 2 reduced [2Fe-2S]-[ferredoxin] + 2 S-adenosyl-L-methionine = 2-methyladenosine(37) in tRNA + 5'-deoxyadenosine + L-methionine + 2 oxidized [2Fe-2S]-[ferredoxin] + S-adenosyl-L-homocysteine. Functionally, specifically methylates position 2 of adenine 2503 in 23S rRNA and position 2 of adenine 37 in tRNAs. m2A2503 modification seems to play a crucial role in the proofreading step occurring at the peptidyl transferase center and thus would serve to optimize ribosomal fidelity. This is Dual-specificity RNA methyltransferase RlmN from Desulfotalea psychrophila (strain LSv54 / DSM 12343).